A 447-amino-acid polypeptide reads, in one-letter code: ATP-dependent protease ATPase subunit HslU (447 aa).

ATP-binding positions include I17, 59–64, D256, E321, and R393; that span reads GVGKTE.

Belongs to the ClpX chaperone family. HslU subfamily. A double ring-shaped homohexamer of HslV is capped on each side by a ring-shaped HslU homohexamer. The assembly of the HslU/HslV complex is dependent on binding of ATP.

The protein localises to the cytoplasm. ATPase subunit of a proteasome-like degradation complex; this subunit has chaperone activity. The binding of ATP and its subsequent hydrolysis by HslU are essential for unfolding of protein substrates subsequently hydrolyzed by HslV. HslU recognizes the N-terminal part of its protein substrates and unfolds these before they are guided to HslV for hydrolysis. The chain is ATP-dependent protease ATPase subunit HslU from Pseudomonas putida (strain GB-1).